Consider the following 229-residue polypeptide: MEWTETQFDRQRREMVDSLRRNGIQNPWVLEAFQEVRRHLFVPEEGRAHAYDDAAWPIGYGQTISQPFTVAYMTSLLADHVPGGSGRPFGRVLEIGTGSGYQAAILEAIGYSVFSVERLPVLYHQAKAKFHRFGLPITCRLGDGTLGWPEEAPFDGILVSAGAPSEPKALKEQLAENGSMVIPVGNRGMQVMTLVTRKGARFEREQYQNFAFVPLVGREGWDDKNTLLY.

Serine 65 is an active-site residue.

Belongs to the methyltransferase superfamily. L-isoaspartyl/D-aspartyl protein methyltransferase family.

It localises to the cytoplasm. The enzyme catalyses [protein]-L-isoaspartate + S-adenosyl-L-methionine = [protein]-L-isoaspartate alpha-methyl ester + S-adenosyl-L-homocysteine. Catalyzes the methyl esterification of L-isoaspartyl residues in peptides and proteins that result from spontaneous decomposition of normal L-aspartyl and L-asparaginyl residues. It plays a role in the repair and/or degradation of damaged proteins. The polypeptide is Protein-L-isoaspartate O-methyltransferase (Chlorobium phaeovibrioides (strain DSM 265 / 1930) (Prosthecochloris vibrioformis (strain DSM 265))).